The following is a 234-amino-acid chain: Alpha N-terminal protein methyltransferase 1 (234 aa).

Residues G71, R76, 93 to 95 (DVV), 120 to 121 (LQ), and Q136 each bind S-adenosyl-L-methionine.

Belongs to the methyltransferase superfamily. NTM1 family. Expressed in uterine cells and PVT neurons of the tail. Expressed in pharynx, intestine and DVB tail neuron.

The catalysed reaction is N-terminal L-alanyl-L-prolyl-L-lysyl-[protein] + 3 S-adenosyl-L-methionine = N-terminal N,N,N-trimethyl-L-alanyl-L-prolyl-L-lysyl-[protein] + 3 S-adenosyl-L-homocysteine + 3 H(+). It carries out the reaction N-terminal L-seryl-L-prolyl-L-lysyl-[protein] + 3 S-adenosyl-L-methionine = N-terminal N,N,N-trimethyl-L-seryl-L-prolyl-L-lysyl-[protein] + 3 S-adenosyl-L-homocysteine + 3 H(+). It catalyses the reaction N-terminal L-prolyl-L-prolyl-L-lysyl-[protein] + 2 S-adenosyl-L-methionine = N-terminal N,N-dimethyl-L-prolyl-L-prolyl-L-lysyl-[protein] + 2 S-adenosyl-L-homocysteine + 2 H(+). Alpha-N-methyltransferase that methylates the N-terminus of target proteins containing the N-terminal motif [Ala/Pro/Ser]-Pro-Lys when the initiator Met is cleaved. Specifically catalyzes mono-, di- or tri-methylation of exposed alpha-amino group of Ala or Ser residue in the [Ala/Ser]-Pro-Lys motif and mono- or di-methylation of Pro in the Pro-Pro-Lys motif. Probably required for the synthesis of neurotransmitter melatonin from serotonin, which plays a role in promoting a sleep-like state, called lethargus, during larval development. The protein is Alpha N-terminal protein methyltransferase 1 of Caenorhabditis elegans.